The following is a 146-amino-acid chain: uncharacterized protein (146 aa).

Positions 34–135 (EDKIVNDVMT…PLLEKAHALF (102 aa)) constitute a Glutaredoxin domain. [2Fe-2S] cluster is bound at residue cysteine 54.

The protein belongs to the glutaredoxin family. Monothiol subfamily.

This is an uncharacterized protein from Caenorhabditis elegans.